Consider the following 233-residue polypeptide: Small ribosomal subunit protein uS2 (233 aa).

It belongs to the universal ribosomal protein uS2 family.

This chain is Small ribosomal subunit protein uS2, found in Bacillus cytotoxicus (strain DSM 22905 / CIP 110041 / 391-98 / NVH 391-98).